The following is a 364-amino-acid chain: Peptide chain release factor 1 (364 aa).

Gln238 is modified (N5-methylglutamine). The segment covering 286–297 has biased composition (basic and acidic residues); it reads DEKRQAEEDSTR. The segment at 286-315 is disordered; that stretch reads DEKRQAEEDSTRRNLVGSGDRSERIRTYNY.

The protein belongs to the prokaryotic/mitochondrial release factor family. Methylated by PrmC. Methylation increases the termination efficiency of RF1.

It localises to the cytoplasm. Peptide chain release factor 1 directs the termination of translation in response to the peptide chain termination codons UAG and UAA. This chain is Peptide chain release factor 1, found in Idiomarina loihiensis (strain ATCC BAA-735 / DSM 15497 / L2-TR).